Consider the following 103-residue polypeptide: ATP-dependent Clp protease adapter protein ClpS 2 (103 aa).

This sequence belongs to the ClpS family. In terms of assembly, binds to the N-terminal domain of the chaperone ClpA.

Involved in the modulation of the specificity of the ClpAP-mediated ATP-dependent protein degradation. This chain is ATP-dependent Clp protease adapter protein ClpS 2, found in Agrobacterium fabrum (strain C58 / ATCC 33970) (Agrobacterium tumefaciens (strain C58)).